Consider the following 329-residue polypeptide: Ribosomal RNA small subunit methyltransferase H (329 aa).

S-adenosyl-L-methionine-binding positions include 39 to 41 (GGY), Asp56, Phe85, Asp106, and Gln113. Residues 289-308 (SGAIRPTPEEEARNPRARSA) form a disordered region.

Belongs to the methyltransferase superfamily. RsmH family.

It is found in the cytoplasm. It catalyses the reaction cytidine(1402) in 16S rRNA + S-adenosyl-L-methionine = N(4)-methylcytidine(1402) in 16S rRNA + S-adenosyl-L-homocysteine + H(+). In terms of biological role, specifically methylates the N4 position of cytidine in position 1402 (C1402) of 16S rRNA. This is Ribosomal RNA small subunit methyltransferase H from Novosphingobium aromaticivorans (strain ATCC 700278 / DSM 12444 / CCUG 56034 / CIP 105152 / NBRC 16084 / F199).